Here is a 611-residue protein sequence, read N- to C-terminus: Histone acetyltransferase KAT7 (611 aa).

A disordered region spans residues 1 to 173; that stretch reads MPRRKRNAGS…SDLSHRPKRR (173 aa). Position 10 is a phosphoserine (S10). Low complexity predominate over residues 42-57; sequence VTRSSARLSQSSQDSS. Phosphoserine; by ATR occurs at positions 50 and 53. S57 is modified (phosphoserine; by PLK1). The residue at position 64 (S64) is a Phosphoserine. Phosphothreonine; by CDK1 occurs at positions 85 and 88. Over residues 96–105 the composition is skewed to polar residues; the sequence is QTRSSGSETE. Residue S102 is modified to Phosphoserine. T104 is subject to Phosphothreonine. Residues 110–125 show a composition bias toward basic and acidic residues; that stretch reads FSDRETKNTADHDESP. Phosphoserine occurs at positions 111 and 124. Phosphothreonine is present on T128. A compositionally biased stretch (low complexity) spans 134 to 145; sequence PSSESDIDISSP. Residues 148 to 168 show a composition bias toward basic and acidic residues; the sequence is SHDESIAKDMSLKDSGSDLSH. Residues S158, S162, S164, and S178 each carry the phosphoserine modification. A CCHHC-type zinc finger spans residues 176–219; it reads HESYNFNMKCPTPGCNSLGHLTGKHERHFSISGCPLYHNLSADE. N6-acetyllysine is present on residues K199 and K277. A Glycyl lysine isopeptide (Lys-Gly) (interchain with G-Cter in SUMO2) cross-link involves residue K323. Residues 332–607 form the MYST-type HAT domain; the sequence is EGSNMIKTIA…MDPSCLKWTP (276 aa). K338 is covalently cross-linked (Glycyl lysine isopeptide (Lys-Gly) (interchain with G-Cter in ubiquitin)). A C2HC MYST-type zinc finger spans residues 365 to 390; that stretch reads LYMCEFCLKYMKSQTILRRHMAKCVW. Residues C368, C371, H384, and C388 each coordinate Zn(2+). K432 is modified (N6-acetyllysine; by autocatalysis). Acetyl-CoA contacts are provided by residues 475–477 and 483–488; these read ILT and RQGYGK. S506 bears the Phosphoserine mark. E508 acts as the Proton donor/acceptor in catalysis. Residues S512 and S521 each coordinate acetyl-CoA.

Belongs to the MYST (SAS/MOZ) family. In terms of assembly, component of the HBO1 complex composed of KAT7/HBO1, MEAF6, ING4 or ING5, and one scaffold subunit: complexes containing BRPF scaffold (BRPF1, BRD1/BRPF2 or BRPF3) direct KAT7/HBO1 specificity towards H3K14ac, while complexes containing JADE scaffold (JADE1, JADE2 and JADE3) mediate acetylation of histone H4. Interacts with MCM2 and ORC1. Interacts with the androgen receptor (AR); in the presence of dihydrotestosterone. Interacts with CDT1. Interacts with MAP2K1 and CUL1. Interacts with p53/TP53; leading to inhibit histone acetyltransferase activity. Interacts with MIS18BP1. Post-translationally, phosphorylated at Ser-50 and Ser-53 by ATR in response to DNA damage, promoting its ubiquitination by the CRL4(DDB2) complex and subsequent degradation. Phosphorylation at Ser-50 and Ser-53 by ATR in response to ultraviolet-induced DNA, promotes localization to DNA damage sites. Phosphorylation at Ser-57 by PLK1 during mitosis seems important for prereplicative complex formation and DNA replication licensing, and requires prior phosphorylation at Thr-85 and Thr-88 by CDK1. Phosphorylated by MAP2K1, which accelerates its degradation. Ubiquitinated at Lys-338, leading to proteasomal degradation. Ubiquitinated by the CRL4(DDB2) complex following phosphorylation by ATR, leading to its subsequent degradation. In terms of processing, autoacetylation at Lys-432 is required for proper function. In terms of tissue distribution, ubiquitously expressed, with highest levels in testis.

It is found in the nucleus. The protein localises to the chromosome. It localises to the centromere. Its subcellular location is the cytoplasm. The protein resides in the cytosol. It carries out the reaction L-lysyl-[histone] + acetyl-CoA = N(6)-acetyl-L-lysyl-[histone] + CoA + H(+). Its activity is regulated as follows. Histone acetyltransferase activity is inhibited by GMNN in the context of a complex with CDT1, inhibiting histone H4 acetylation and DNA replication licensing. Selectively inhibited by WM-3835 (N'-(4-fluoro-5-methyl-[1,1'-biphenyl]-3-carbonyl)-3- hydroxybenzenesulfonohydrazide) inhibitor. Catalytic subunit of histone acetyltransferase HBO1 complexes, which specifically mediate acetylation of histone H3 at 'Lys-14' (H3K14ac), thereby regulating various processes, such as gene transcription, protein ubiquitination, immune regulation, stem cell pluripotent and self-renewal maintenance and embryonic development. Some complexes also catalyze acetylation of histone H4 at 'Lys-5', 'Lys-8' and 'Lys-12' (H4K5ac, H4K8ac and H4K12ac, respectively), regulating DNA replication initiation, regulating DNA replication initiation. Specificity of the HBO1 complexes is determined by the scaffold subunit: complexes containing BRPF scaffold (BRPF1, BRD1/BRPF2 or BRPF3) direct KAT7/HBO1 specificity towards H3K14ac, while complexes containing JADE (JADE1, JADE2 and JADE3) scaffold direct KAT7/HBO1 specificity towards histone H4. H3K14ac promotes transcriptional elongation by facilitating the processivity of RNA polymerase II. Acts as a key regulator of hematopoiesis by forming a complex with BRD1/BRPF2, directing KAT7/HBO1 specificity towards H3K14ac and promoting erythroid differentiation. H3K14ac is also required for T-cell development. KAT7/HBO1-mediated acetylation facilitates two consecutive steps, licensing and activation, in DNA replication initiation: H3K14ac facilitates the activation of replication origins, and histone H4 acetylation (H4K5ac, H4K8ac and H4K12ac) facilitates chromatin loading of MCM complexes, promoting DNA replication licensing. Acts as a positive regulator of centromeric CENPA assembly: recruited to centromeres and mediates histone acetylation, thereby preventing centromere inactivation mediated by SUV39H1, possibly by increasing histone turnover/exchange. Involved in nucleotide excision repair: phosphorylation by ATR in response to ultraviolet irradiation promotes its localization to DNA damage sites, where it mediates histone acetylation to facilitate recruitment of XPC at the damaged DNA sites. Acts as an inhibitor of NF-kappa-B independently of its histone acetyltransferase activity. Its function is as follows. Plays a central role in the maintenance of leukemia stem cells in acute myeloid leukemia (AML). Acts by mediating acetylation of histone H3 at 'Lys-14' (H3K14ac), thereby facilitating the processivity of RNA polymerase II to maintain the high expression of key genes, such as HOXA9 and HOXA10 that help to sustain the functional properties of leukemia stem cells. This is Histone acetyltransferase KAT7 from Homo sapiens (Human).